The following is a 142-amino-acid chain: Hemoglobin subunit alpha (142 aa).

The 141-residue stretch at 2–142 (VLSPTDKSNV…VSTVLTSKYR (141 aa)) folds into the Globin domain. A Phosphoserine modification is found at Ser-4. An N6-succinyllysine mark is found at Lys-8 and Lys-12. Lys-17 is subject to N6-acetyllysine; alternate. An N6-succinyllysine; alternate modification is found at Lys-17. Tyr-25 carries the phosphotyrosine modification. Lys-41 carries the N6-succinyllysine modification. His-59 serves as a coordination point for O2. His-88 is a heme b binding site. Ser-103 carries the phosphoserine modification. Thr-109 bears the Phosphothreonine mark. 2 positions are modified to phosphoserine: Ser-125 and Ser-132. Thr-135 and Thr-138 each carry phosphothreonine. Residue Ser-139 is modified to Phosphoserine.

The protein belongs to the globin family. As to quaternary structure, heterotetramer of two alpha chains and two beta chains. Red blood cells.

Involved in oxygen transport from the lung to the various peripheral tissues. Functionally, hemopressin acts as an antagonist peptide of the cannabinoid receptor CNR1. Hemopressin-binding efficiently blocks cannabinoid receptor CNR1 and subsequent signaling. This Balaenoptera acutorostrata (Common minke whale) protein is Hemoglobin subunit alpha (HBA).